The chain runs to 178 residues: Probable DNA-directed RNA polymerase subunit delta (178 aa).

In terms of domain architecture, HTH HARE-type spans 14-81 (LSMIEVAHAI…GENTWGLRTW (68 aa)). Residues 120-143 (DDDVIDYDSDDPEDEEVEAEDTTS) are compositionally biased toward acidic residues. Residues 120 to 178 (DDDVIDYDSDDPEDEEVEAEDTTSDDAPAFEDLSNDDDTDVLPDGIEGQLSELNEDDEN) are disordered.

It belongs to the RpoE family. As to quaternary structure, RNAP is composed of a core of 2 alpha, a beta and a beta' subunits. The core is associated with a delta subunit and one of several sigma factors.

In terms of biological role, participates in both the initiation and recycling phases of transcription. In the presence of the delta subunit, RNAP displays an increased specificity of transcription, a decreased affinity for nucleic acids, and an increased efficiency of RNA synthesis because of enhanced recycling. The sequence is that of Probable DNA-directed RNA polymerase subunit delta from Pediococcus pentosaceus (strain ATCC 25745 / CCUG 21536 / LMG 10740 / 183-1w).